We begin with the raw amino-acid sequence, 312 residues long: DNA-directed RNA polymerase subunit alpha (312 aa).

Residues 1-226 (MIEFEKPIIT…EHLNLFTDLT (226 aa)) are alpha N-terminal domain (alpha-NTD). Residues 243-312 (DEKVLDRTIE…DLGLGLKNDK (70 aa)) form an alpha C-terminal domain (alpha-CTD) region.

The protein belongs to the RNA polymerase alpha chain family. As to quaternary structure, homodimer. The RNAP catalytic core consists of 2 alpha, 1 beta, 1 beta' and 1 omega subunit. When a sigma factor is associated with the core the holoenzyme is formed, which can initiate transcription.

It carries out the reaction RNA(n) + a ribonucleoside 5'-triphosphate = RNA(n+1) + diphosphate. Its function is as follows. DNA-dependent RNA polymerase catalyzes the transcription of DNA into RNA using the four ribonucleoside triphosphates as substrates. The polypeptide is DNA-directed RNA polymerase subunit alpha (Streptococcus pyogenes serotype M3 (strain ATCC BAA-595 / MGAS315)).